Reading from the N-terminus, the 585-residue chain is Neopullulanase 2 (585 aa).

The Ca(2+) site is built by asparagine 143, aspartate 145, asparagine 148, aspartate 149, glycine 169, and aspartate 171. Positions 244 and 323 each coordinate substrate. The active-site Nucleophile is the aspartate 325. The active-site Proton donor is the glutamate 354. Substrate contacts are provided by residues histidine 420 to aspartate 421, aspartate 465, and arginine 469.

This sequence belongs to the glycosyl hydrolase 13 family. In terms of assembly, monomer. Requires Ca(2+) as cofactor.

The enzyme catalyses Hydrolysis of pullulan to panose (6-alpha-D-glucosylmaltose).. In terms of biological role, hydrolyzes pullulan efficiently but only a small amount of starch. Endohydrolysis of 1,4-alpha-glucosidic linkages in pullulan to form panose. Also cleaves (1-6)-alpha-glucosidic linkages to form maltotriose. This Thermoactinomyces vulgaris protein is Neopullulanase 2 (tvaII).